The chain runs to 257 residues: Imidazole glycerol phosphate synthase subunit HisF (257 aa).

Active-site residues include aspartate 11 and aspartate 130.

It belongs to the HisA/HisF family. As to quaternary structure, heterodimer of HisH and HisF.

The protein resides in the cytoplasm. It carries out the reaction 5-[(5-phospho-1-deoxy-D-ribulos-1-ylimino)methylamino]-1-(5-phospho-beta-D-ribosyl)imidazole-4-carboxamide + L-glutamine = D-erythro-1-(imidazol-4-yl)glycerol 3-phosphate + 5-amino-1-(5-phospho-beta-D-ribosyl)imidazole-4-carboxamide + L-glutamate + H(+). Its pathway is amino-acid biosynthesis; L-histidine biosynthesis; L-histidine from 5-phospho-alpha-D-ribose 1-diphosphate: step 5/9. Its function is as follows. IGPS catalyzes the conversion of PRFAR and glutamine to IGP, AICAR and glutamate. The HisF subunit catalyzes the cyclization activity that produces IGP and AICAR from PRFAR using the ammonia provided by the HisH subunit. This is Imidazole glycerol phosphate synthase subunit HisF from Aliivibrio salmonicida (strain LFI1238) (Vibrio salmonicida (strain LFI1238)).